Consider the following 117-residue polypeptide: UPF0295 protein GK0479 (117 aa).

2 consecutive transmembrane segments (helical) span residues 12-32 (IRTF…LGLF) and 42-62 (LFML…FWIG).

This sequence belongs to the UPF0295 family.

It is found in the cell membrane. This Geobacillus kaustophilus (strain HTA426) protein is UPF0295 protein GK0479.